Reading from the N-terminus, the 143-residue chain is Spliceosomal protein DIB1 (143 aa).

The protein belongs to the DIM1 family. Component of the 25S [U4/U6.U5] tri-snRNP.

It localises to the nucleus. Essential role in pre-mRNA splicing. Also essential for entry into mitosis (G2/M progression) as well as for chromosome segregation during mitosis. This chain is Spliceosomal protein DIB1 (DIB1), found in Eremothecium gossypii (strain ATCC 10895 / CBS 109.51 / FGSC 9923 / NRRL Y-1056) (Yeast).